Reading from the N-terminus, the 179-residue chain is MASTPPLSASPNSSKPTSPRASNRGLGLTSRQGSRSSRPSNDNGSRGVATTPIPDEDHSADLPLTMSASIVLTGLPKDAHQALADVEAIDSGKVTVRFQPLPSAPILRNRVFKISASQKFETVVKFLRKKLDCKDTDSVFCYVNSVFAPGLDEGVGGLWRCFKTDDQLIVAYSMTPAFG.

2 stretches are compositionally biased toward polar residues: residues methionine 1–alanine 21 and threonine 29–glycine 44. Residues methionine 1 to alanine 60 form a disordered region. A Glycyl lysine isopeptide (Gly-Lys) (interchain with K-172 in ATG5) cross-link involves residue glycine 179.

The protein belongs to the ATG12 family. In terms of assembly, forms a conjugate with ATG5.

It is found in the preautophagosomal structure membrane. In terms of biological role, ubiquitin-like protein involved in cytoplasm to vacuole transport (Cvt), autophagy vesicles formation, mitophagy, and nucleophagy. Conjugation with ATG5 through a ubiquitin-like conjugating system involving also ATG7 as an E1-like activating enzyme and ATG10 as an E2-like conjugating enzyme, is essential for its function. The ATG12-ATG5 conjugate functions as an E3-like enzyme which is required for lipidation of ATG8 and ATG8 association to the vesicle membranes. The chain is Ubiquitin-like protein ATG12 (ATG12) from Ajellomyces capsulatus (strain NAm1 / WU24) (Darling's disease fungus).